Consider the following 118-residue polypeptide: ATP synthase subunit c (118 aa).

Helical transmembrane passes span Ala-34–Gly-54 and Met-88–Ala-108.

It belongs to the ATPase C chain family. As to quaternary structure, F-type ATPases have 2 components, F(1) - the catalytic core - and F(0) - the membrane proton channel. F(1) has five subunits: alpha(3), beta(3), gamma(1), delta(1), epsilon(1). F(0) has three main subunits: a(1), b(2) and c(10-14). The alpha and beta chains form an alternating ring which encloses part of the gamma chain. F(1) is attached to F(0) by a central stalk formed by the gamma and epsilon chains, while a peripheral stalk is formed by the delta and b chains.

It localises to the cell inner membrane. F(1)F(0) ATP synthase produces ATP from ADP in the presence of a proton or sodium gradient. F-type ATPases consist of two structural domains, F(1) containing the extramembraneous catalytic core and F(0) containing the membrane proton channel, linked together by a central stalk and a peripheral stalk. During catalysis, ATP synthesis in the catalytic domain of F(1) is coupled via a rotary mechanism of the central stalk subunits to proton translocation. Its function is as follows. Key component of the F(0) channel; it plays a direct role in translocation across the membrane. A homomeric c-ring of between 10-14 subunits forms the central stalk rotor element with the F(1) delta and epsilon subunits. The sequence is that of ATP synthase subunit c from Syntrophus aciditrophicus (strain SB).